A 395-amino-acid chain; its full sequence is uncharacterized protein (395 aa).

2 disordered regions span residues 17 to 155 (EVKK…QVKT) and 276 to 304 (EERE…HEQK). Polar residues-rich tracts occupy residues 42–71 (DGNN…SNVV) and 81–96 (GDAS…NVVK). Basic and acidic residues predominate over residues 103–133 (VAEKPEKEDLAVIESEDKAAKPDGEIKKNVE). The segment covering 134-143 (TEVTSRSTSS) has biased composition (low complexity). Composition is skewed to basic and acidic residues over residues 144-155 (QEKDELEKQVKT) and 276-290 (EERE…KEQS). A coiled-coil region spans residues 224-351 (LKMNGKEDDL…QRRLKELEAM (128 aa)). Polar residues predominate over residues 291–300 (SEGSKTANQT).

The protein localises to the cytoplasm. This is an uncharacterized protein from Schizosaccharomyces pombe (strain 972 / ATCC 24843) (Fission yeast).